The primary structure comprises 400 residues: tRNA-specific 2-thiouridylase MnmA (400 aa).

Residues 19–26 (AMSGGVDS) and Leu45 each bind ATP. Cys113 serves as the catalytic Nucleophile. A disulfide bridge links Cys113 with Cys210. Gly137 contributes to the ATP binding site. Positions 160 to 162 (RDQ) are interaction with tRNA. The Cysteine persulfide intermediate role is filled by Cys210.

This sequence belongs to the MnmA/TRMU family.

It localises to the cytoplasm. The catalysed reaction is S-sulfanyl-L-cysteinyl-[protein] + uridine(34) in tRNA + AH2 + ATP = 2-thiouridine(34) in tRNA + L-cysteinyl-[protein] + A + AMP + diphosphate + H(+). Catalyzes the 2-thiolation of uridine at the wobble position (U34) of tRNA, leading to the formation of s(2)U34. This is tRNA-specific 2-thiouridylase MnmA from Rhodopseudomonas palustris (strain BisB18).